Reading from the N-terminus, the 281-residue chain is uncharacterized protein (281 aa).

The first 23 residues, 1–23 (MKLYRSLKAALLPGICTSILLAS), serve as a signal peptide directing secretion. A lipid anchor (N-palmitoyl cysteine) is attached at Cys24. Cys24 carries S-diacylglycerol cysteine lipidation. The interval 145–165 (HHDHNHMHNHEHEHEEHHDEE) is disordered. Positions 150 to 161 (HMHNHEHEHEEH) are enriched in basic and acidic residues.

The protein resides in the cell membrane. This is an uncharacterized protein from Mycoplasma genitalium (strain ATCC 33530 / DSM 19775 / NCTC 10195 / G37) (Mycoplasmoides genitalium).